The following is a 425-amino-acid chain: 2-methylserine hydroxymethyltransferase (425 aa).

(6S)-5,6,7,8-tetrahydrofolate is bound by residues Leu-126 and 130–132 (GHL). Lys-235 carries the post-translational modification N6-(pyridoxal phosphate)lysine. Glu-251 contributes to the (6S)-5,6,7,8-tetrahydrofolate binding site.

It belongs to the SHMT family. In terms of assembly, homodimer. Pyridoxal 5'-phosphate serves as cofactor.

The protein resides in the cytoplasm. It catalyses the reaction (6R)-5,10-methylene-5,6,7,8-tetrahydrofolate + D-alanine + H2O = 2-methylserine + (6S)-5,6,7,8-tetrahydrofolate. The protein operates within one-carbon metabolism; tetrahydrofolate interconversion. Inhibited by hydroxylamine and sodium borohydride. Functionally, catalyzes the reversible interconversion of alpha-methyl-L-serine to D-alanine with tetrahydrofolate (THF) serving as the one-carbon carrier. Cannot use alpha-methyl-D-serine, L-serine, D-serine or L-alanine. The sequence is that of 2-methylserine hydroxymethyltransferase from Paracoccus sp.